A 122-amino-acid chain; its full sequence is Large ribosomal subunit protein uL14c (122 aa).

This sequence belongs to the universal ribosomal protein uL14 family. Part of the 50S ribosomal subunit.

It localises to the plastid. The protein localises to the chloroplast. In terms of biological role, binds to 23S rRNA. The sequence is that of Large ribosomal subunit protein uL14c from Chlorella vulgaris (Green alga).